The following is a 120-amino-acid chain: Large ribosomal subunit protein bL20 (120 aa).

This sequence belongs to the bacterial ribosomal protein bL20 family.

Binds directly to 23S ribosomal RNA and is necessary for the in vitro assembly process of the 50S ribosomal subunit. It is not involved in the protein synthesizing functions of that subunit. This Ureaplasma urealyticum serovar 10 (strain ATCC 33699 / Western) protein is Large ribosomal subunit protein bL20.